The primary structure comprises 2090 residues: Nuclear pore complex protein Nup214 (2090 aa).

Position 2 is an N-acetylglycine (glycine 2). Serine 30 is subject to Phosphoserine. 7 Blade repeats span residues 41-93, 94-150, 151-193, 194-239, 240-303, 304-359, and 360-404; these read LLAV…PMKF, PIHH…DAGG, MVID…PSTV, AVTS…ESDH, PVRV…ERQH, HYYL…KSDD, and SLPM…FYMI. The segment at 41–404 is seven-bladed beta propeller; that stretch reads LLAVSNKYGL…DGVLCPFYMI (364 aa). The 44 X 2 AA repeats of F-G stretch occupies residues 236–1418; the sequence is ESDHPVRVLD…AVFGSLPVTS (1183 aa). Threonine 416 carries the phosphothreonine modification. Residues serine 421, serine 430, and serine 433 each carry the phosphoserine modification. The interval 422–460 is disordered; the sequence is LEGERQPKSPGSTPTTPTSSQAPQKLDASAAAAPASLPP. Positions 429-441 are enriched in low complexity; sequence KSPGSTPTTPTSS. A phosphothreonine mark is found at threonine 434, threonine 437, and threonine 439. A (Microbial infection) Binds human adenovirus 5 (HAdV-5) protein L3 (hexon) region spans residues 450–586; that stretch reads SAAAAPASLP…PPSTSAVKVN (137 aa). Residues 481–2076 are 11 X 5 AA approximate repeats; that stretch reads VFSFGSSSLK…GSGTGGFSFG (1596 aa). Repeat 1 spans residues 484–485; that stretch reads FG. 2 stretches are compositionally biased toward low complexity: residues 489–513 and 524–536; these read LKSSATVTGEPPSYSSGSDSSKAAP and PPSKASLAPTPAA. The tract at residues 489–536 is disordered; that stretch reads LKSSATVTGEPPSYSSGSDSSKAAPGPGPSTFSFVPPSKASLAPTPAA. Repeat unit 2 spans residues 548–549; the sequence is FG. Composition is skewed to low complexity over residues 597–629 and 637–658; these read STPVSSSQSAPPMSPFSSASKPAASGPLSHPTP and VPLKSSVLPSPSGRSAQGSSSP. The interval 597-700 is disordered; it reads STPVSSSQSA…KQGHQWKDSD (104 aa). Serine 651, serine 657, and serine 666 each carry phosphoserine. The residue at position 670 (threonine 670) is a Phosphothreonine. Phosphoserine is present on serine 678. Residues 680 to 1209 adopt a coiled-coil conformation; the sequence is QAKSLQPAVA…VTSTPSASGQ (530 aa). A compositionally biased stretch (basic and acidic residues) spans 691 to 700; that stretch reads KQGHQWKDSD. Leucine-zipper regions lie at residues 740–768 and 861–882; these read LRTESDDLHTFLLEIKETTESLHGDISSL and LANNREIINQQRKRLNHLVDSL. Serine 760 carries the post-translational modification Phosphoserine. Phosphoserine is present on residues serine 940, serine 970, serine 974, and serine 989. The disordered stretch occupies residues 987–1009; it reads TSSVSQSLESEDARTSCKDDEAV. A compositionally biased stretch (basic and acidic residues) spans 997-1007; the sequence is EDARTSCKDDE. Position 1021 is a phosphothreonine (threonine 1021). 4 positions are modified to phosphoserine: serine 1023, serine 1045, serine 1056, and serine 1081. Over residues 1128–1149 the composition is skewed to polar residues; it reads LKNNPATPSTAMGSSVPYSTAK. The interval 1128-1152 is disordered; it reads LKNNPATPSTAMGSSVPYSTAKTPH. Threonine 1134, threonine 1150, and threonine 1156 each carry phosphothreonine. Composition is skewed to polar residues over residues 1168-1188 and 1199-1213; these read LINSLKPSGPTPASGQLSSGD and AVTSTPSASGQFSKP. Residues 1168-1213 form a disordered region; that stretch reads LINSLKPSGPTPASGQLSSGDKASGTAKIETAVTSTPSASGQFSKP. Position 1181 is a phosphoserine (serine 1181). Copy 3 of the repeat occupies 1225–1226; it reads FG. Composition is skewed to polar residues over residues 1234–1254 and 1273–1285; these read SNFTAAQGATPSTKESSQPDA and PPSGITSASNTTP. Disordered stretches follow at residues 1234–1316 and 1337–1408; these read SNFT…PPSK and LRVG…TSST. The span at 1288 to 1299 shows a compositional bias: low complexity; that stretch reads PAASSSRPVAPS. Residues 1301 to 1310 show a composition bias toward polar residues; the sequence is TALSTTSSKL. The residue at position 1312 (threonine 1312) is a Phosphothreonine. The span at 1347–1368 shows a compositional bias: polar residues; that stretch reads KPTNKASSTSLTSTQPTKTSGV. Residue serine 1353 is modified to Phosphoserine. The segment covering 1386 to 1408 has biased composition (low complexity); the sequence is PPVTSSATTTSVAPPAATSTSST. Residues 1409–2084 form an 18 X 4 AA approximate repeats region; it reads AVFGSLPVTS…FGSNNSSVQG (676 aa). A run of 4 repeats spans residues 1411-1412, 1427-1428, 1441-1442, and 1473-1474. Residues 1427 to 2085 form an 11 X 3 AA approximate repeats region; the sequence is FGGTSLSAGK…GSNNSSVQGF (659 aa). The segment covering 1438–1450 has biased composition (polar residues); the sequence is SFSFGSQQTNSTV. A disordered region spans residues 1438–1467; that stretch reads SFSFGSQQTNSTVPPSAPPPTTAATPLPTS. Composition is skewed to low complexity over residues 1479–1489 and 1508–1527; these read SATTPSLPMSA and SEVSASAASLLEEQQSAQLP. The disordered stretch occupies residues 1479-1539; the sequence is SATTPSLPMS…PPQTSDSVKK (61 aa). Lysine 1538 is covalently cross-linked (Glycyl lysine isopeptide (Lys-Gly) (interchain with G-Cter in SUMO2)). Tandem repeats lie at residues 1635 to 1636, 1674 to 1675, 1686 to 1687, 1713 to 1714, 1721 to 1722, 1726 to 1727, 1732 to 1733, 1756 to 1757, 1772 to 1773, 1786 to 1787, 1798 to 1799, 1806 to 1807, 1812 to 1813, 1819 to 1820, 1842 to 1843, 1851 to 1852, 1862 to 1863, and 1874 to 1875. The tract at residues 1884-1903 is disordered; sequence GFFSGLGGKPSQDAANKNPF. 5 tandem repeats follow at residues 1910-1911, 1922-1923, 1930-1931, 1938-1939, and 1959-1960. At serine 1963 the chain carries Phosphoserine. A run of 3 repeats spans residues 1970-1971, 1976-1977, and 1982-1983. Serine 1985 is subject to Phosphoserine. 11 repeat units span residues 1988-1989, 1994-1995, 2012-2013, 2024-2025, 2026-2027, 2035-2036, 2046-2047, 2056-2057, 2066-2067, 2075-2076, and 2085-2086.

In terms of assembly, homodimer. Part of the nuclear pore complex (NPC). Interacts with NUP88. Interacts with ZFP36; this interaction increases upon lipopolysaccharide (LPS) stimulation. Interacts with DDX19. Interacts with XPO1. Interacts with XPO5. As to quaternary structure, (Microbial infection) Interacts with human herpes virus 1 (HHV-1) protein UL25; this interaction might be essential to the capsid docking onto the host nuclear pore. (Microbial infection) Interacts (via N-terminus) with human adenovirus 5 (HAdV-5) protein L3 (hexon); this interaction might be essential for the release of the virus genome to the nucleus. In terms of processing, probably glycosylated as it reacts with wheat germ agglutinin (WGA). In terms of tissue distribution, expressed in thymus, spleen, bone marrow, kidney, brain and testis, but hardly in all other tissues or in whole embryos during development.

The protein localises to the nucleus. The protein resides in the nuclear pore complex. In terms of biological role, part of the nuclear pore complex. Has a critical role in nucleocytoplasmic transport. May serve as a docking site in the receptor-mediated import of substrates across the nuclear pore complex. Functionally, (Microbial infection) Required for capsid disassembly of the human adenovirus 5 (HadV-5) leading to release of the viral genome to the nucleus (in vitro). This Homo sapiens (Human) protein is Nuclear pore complex protein Nup214 (NUP214).